Consider the following 159-residue polypeptide: Transcriptional repressor NrdR (159 aa).

The disordered stretch occupies residues 1–26 (MRCPFCAHDNSQVKDSRPSEDNTSIR). The segment at 3-34 (CPFCAHDNSQVKDSRPSEDNTSIRRRRQCEGC) is a zinc-finger region. Over residues 11–24 (SQVKDSRPSEDNTS) the composition is skewed to basic and acidic residues. In terms of domain architecture, ATP-cone spans 49-139 (VVVVKSGERR…VYRDFTEARD (91 aa)).

It belongs to the NrdR family. Zn(2+) serves as cofactor.

Its function is as follows. Negatively regulates transcription of bacterial ribonucleotide reductase nrd genes and operons by binding to NrdR-boxes. The polypeptide is Transcriptional repressor NrdR (Novosphingobium aromaticivorans (strain ATCC 700278 / DSM 12444 / CCUG 56034 / CIP 105152 / NBRC 16084 / F199)).